The chain runs to 196 residues: Large ribosomal subunit protein eL15 (196 aa).

Residues 162–196 form a disordered region; it reads RGLTNAGRSNRGLQNRGKGAEHTRPSAGSGSRRGK.

Belongs to the eukaryotic ribosomal protein eL15 family.

The sequence is that of Large ribosomal subunit protein eL15 from Haloquadratum walsbyi (strain DSM 16790 / HBSQ001).